The sequence spans 242 residues: LexA repressor (242 aa).

Residues 26 to 46 (FEEMKAALNLKSKSGIHRLIS) constitute a DNA-binding region (H-T-H motif). Residues Ser-163 and Lys-201 each act as for autocatalytic cleavage activity in the active site.

It belongs to the peptidase S24 family. As to quaternary structure, homodimer.

The enzyme catalyses Hydrolysis of Ala-|-Gly bond in repressor LexA.. Represses a number of genes involved in the response to DNA damage (SOS response), including recA and lexA. In the presence of single-stranded DNA, RecA interacts with LexA causing an autocatalytic cleavage which disrupts the DNA-binding part of LexA, leading to derepression of the SOS regulon and eventually DNA repair. This Granulibacter bethesdensis (strain ATCC BAA-1260 / CGDNIH1) protein is LexA repressor.